We begin with the raw amino-acid sequence, 251 residues long: Triosephosphate isomerase (251 aa).

Substrate is bound at residue 9 to 11 (NWK). The Electrophile role is filled by His95. The active-site Proton acceptor is Glu167. Substrate is bound by residues Gly173, Ser213, and 234 to 235 (GG).

It belongs to the triosephosphate isomerase family. In terms of assembly, homodimer.

It localises to the cytoplasm. The catalysed reaction is D-glyceraldehyde 3-phosphate = dihydroxyacetone phosphate. The protein operates within carbohydrate biosynthesis; gluconeogenesis. It participates in carbohydrate degradation; glycolysis; D-glyceraldehyde 3-phosphate from glycerone phosphate: step 1/1. Its function is as follows. Involved in the gluconeogenesis. Catalyzes stereospecifically the conversion of dihydroxyacetone phosphate (DHAP) to D-glyceraldehyde-3-phosphate (G3P). In Carboxydothermus hydrogenoformans (strain ATCC BAA-161 / DSM 6008 / Z-2901), this protein is Triosephosphate isomerase.